The primary structure comprises 429 residues: Endo-1,4-beta-xylanase 1 (429 aa).

The first 19 residues, 1 to 19 (MQTKSILTAALLAAAPASA), serve as a signal peptide directing secretion. The 294-residue stretch at 43 to 336 (NSDQQYNRIL…KPAWTSISSV (294 aa)) folds into the GH10 domain. Glu-150 functions as the Proton donor in the catalytic mechanism. The Nucleophile role is filled by Glu-257. Cys-286 and Cys-292 form a disulfide bridge. The disordered stretch occupies residues 364–395 (TTPPPISSPIVPSTTTTSAVPTTTVSPPEPEQ). A compositionally biased stretch (low complexity) spans 371-389 (SPIVPSTTTTSAVPTTTVS). A CBM1 domain is found at 393 to 429 (PEQTRWGQCGGIGWNGPTKCQSPWTCTRLNDWYFQCL).

Belongs to the glycosyl hydrolase 10 (cellulase F) family.

The protein localises to the secreted. It carries out the reaction Endohydrolysis of (1-&gt;4)-beta-D-xylosidic linkages in xylans.. The protein operates within glycan degradation; xylan degradation. Its function is as follows. Endo-1,4-beta-xylanase involved in the hydrolysis of xylan, a major structural heterogeneous polysaccharide found in plant biomass representing the second most abundant polysaccharide in the biosphere, after cellulose. In Humicola insolens (Soft-rot fungus), this protein is Endo-1,4-beta-xylanase 1.